The chain runs to 879 residues: Beta-mannosidase (879 aa).

Positions 1–17 (MLLRLLLLLAPCGAGFA) are cleaved as a signal peptide. 2 N-linked (GlcNAc...) asparagine glycosylation sites follow: N35 and N77. The cysteines at positions 167 and 176 are disulfide-linked. 190–192 (WDW) lines the substrate pocket. N297 and N302 each carry an N-linked (GlcNAc...) asparagine glycan. A substrate-binding site is contributed by N456. E457 functions as the Proton donor in the catalytic mechanism. 3 disulfide bridges follow: C540/C629, C732/C761, and C764/C769. The active-site Nucleophile is E554. N607 is a glycosylation site (N-linked (GlcNAc...) asparagine). N803 carries N-linked (GlcNAc...) asparagine glycosylation.

The protein belongs to the glycosyl hydrolase 2 family. Monomer. The N-terminus is blocked. Post-translationally, N-glycosylated. As to expression, detected in kidney (at protein level). Highest expression is found in thyroid tissue. The amount of transcript is significantly higher in normal tissues than in tissues affected by the disease.

The protein localises to the lysosome. The catalysed reaction is Hydrolysis of terminal, non-reducing beta-D-mannose residues in beta-D-mannosides.. Its pathway is glycan metabolism; N-glycan degradation. In terms of biological role, exoglycosidase that cleaves the single beta-linked mannose residue from the non-reducing end of all N-linked glycoprotein oligosaccharides. This chain is Beta-mannosidase (MANBA), found in Bos taurus (Bovine).